Reading from the N-terminus, the 340-residue chain is DNA-directed RNA polymerase subunit alpha (340 aa).

Residues 1–233 (MVREEVAVST…DLFIPFLHAE (233 aa)) are alpha N-terminal domain (alpha-NTD). The tract at residues 266–340 (KKEIALKCIF…GIDLPKNKRF (75 aa)) is alpha C-terminal domain (alpha-CTD).

This sequence belongs to the RNA polymerase alpha chain family. In plastids the minimal PEP RNA polymerase catalytic core is composed of four subunits: alpha, beta, beta', and beta''. When a (nuclear-encoded) sigma factor is associated with the core the holoenzyme is formed, which can initiate transcription.

It localises to the plastid. It is found in the chloroplast. The enzyme catalyses RNA(n) + a ribonucleoside 5'-triphosphate = RNA(n+1) + diphosphate. In terms of biological role, DNA-dependent RNA polymerase catalyzes the transcription of DNA into RNA using the four ribonucleoside triphosphates as substrates. This is DNA-directed RNA polymerase subunit alpha from Calycanthus floridus var. glaucus (Eastern sweetshrub).